The following is a 295-amino-acid chain: 4-hydroxybenzoate octaprenyltransferase (295 aa).

Helical transmembrane passes span 28 to 48, 55 to 75, 103 to 123, 147 to 167, 175 to 195, 219 to 239, 241 to 261, and 275 to 295; these read PIGI…AADG, VLIF…INDF, WALF…TDPF, LPQL…FTAA, AWLI…YYAM, AIIL…GMRL, LGPY…WEFV, and FLHN…DYGI.

It belongs to the UbiA prenyltransferase family. Requires Mg(2+) as cofactor.

It is found in the cell inner membrane. The enzyme catalyses all-trans-octaprenyl diphosphate + 4-hydroxybenzoate = 4-hydroxy-3-(all-trans-octaprenyl)benzoate + diphosphate. The protein operates within cofactor biosynthesis; ubiquinone biosynthesis. In terms of biological role, catalyzes the prenylation of para-hydroxybenzoate (PHB) with an all-trans polyprenyl group. Mediates the second step in the final reaction sequence of ubiquinone-8 (UQ-8) biosynthesis, which is the condensation of the polyisoprenoid side chain with PHB, generating the first membrane-bound Q intermediate 3-octaprenyl-4-hydroxybenzoate. The protein is 4-hydroxybenzoate octaprenyltransferase of Azotobacter vinelandii (strain DJ / ATCC BAA-1303).